A 201-amino-acid polypeptide reads, in one-letter code: Small ribosomal subunit protein uS4c (201 aa).

Positions 15–43 (LGALPGLTSKRPSPGSDLRNQSRSGKRSQ) are disordered. An S4 RNA-binding domain is found at 89-150 (MRLDNILFRL…EQRSRALIQK (62 aa)).

This sequence belongs to the universal ribosomal protein uS4 family. In terms of assembly, part of the 30S ribosomal subunit. Contacts protein S5. The interaction surface between S4 and S5 is involved in control of translational fidelity.

Its subcellular location is the plastid. It localises to the chloroplast. One of the primary rRNA binding proteins, it binds directly to 16S rRNA where it nucleates assembly of the body of the 30S subunit. Its function is as follows. With S5 and S12 plays an important role in translational accuracy. This Ceratophyllum demersum (Rigid hornwort) protein is Small ribosomal subunit protein uS4c (rps4).